Here is an 876-residue protein sequence, read N- to C-terminus: Leucine--tRNA ligase (876 aa).

A 'HIGH' region motif is present at residues Pro42 to His52. The short motif at Lys634–Ser638 is the 'KMSKS' region element. Position 637 (Lys637) interacts with ATP.

The protein belongs to the class-I aminoacyl-tRNA synthetase family.

The protein localises to the cytoplasm. It catalyses the reaction tRNA(Leu) + L-leucine + ATP = L-leucyl-tRNA(Leu) + AMP + diphosphate. In Variovorax paradoxus (strain S110), this protein is Leucine--tRNA ligase.